The sequence spans 337 residues: Alanine racemase (337 aa).

The active-site Proton acceptor; specific for D-alanine is K33. Position 33 is an N6-(pyridoxal phosphate)lysine (K33). Residue R118 coordinates substrate. Y246 serves as the catalytic Proton acceptor; specific for L-alanine. A substrate-binding site is contributed by M292.

Belongs to the alanine racemase family. Requires pyridoxal 5'-phosphate as cofactor.

It carries out the reaction L-alanine = D-alanine. The protein operates within amino-acid biosynthesis; D-alanine biosynthesis; D-alanine from L-alanine: step 1/1. Functionally, catalyzes the interconversion of L-alanine and D-alanine. May also act on other amino acids. The polypeptide is Alanine racemase (alr) (Campylobacter concisus (strain 13826)).